Consider the following 435-residue polypeptide: Serine--tRNA ligase (435 aa).

An L-serine-binding site is contributed by 238–240 (TAE). 269–271 (RKE) lines the ATP pocket. Residue E292 participates in L-serine binding. An ATP-binding site is contributed by 356-359 (EISS). S391 contacts L-serine.

It belongs to the class-II aminoacyl-tRNA synthetase family. Type-1 seryl-tRNA synthetase subfamily. In terms of assembly, homodimer. The tRNA molecule binds across the dimer.

Its subcellular location is the cytoplasm. The enzyme catalyses tRNA(Ser) + L-serine + ATP = L-seryl-tRNA(Ser) + AMP + diphosphate + H(+). The catalysed reaction is tRNA(Sec) + L-serine + ATP = L-seryl-tRNA(Sec) + AMP + diphosphate + H(+). It participates in aminoacyl-tRNA biosynthesis; selenocysteinyl-tRNA(Sec) biosynthesis; L-seryl-tRNA(Sec) from L-serine and tRNA(Sec): step 1/1. Its function is as follows. Catalyzes the attachment of serine to tRNA(Ser). Is also able to aminoacylate tRNA(Sec) with serine, to form the misacylated tRNA L-seryl-tRNA(Sec), which will be further converted into selenocysteinyl-tRNA(Sec). The protein is Serine--tRNA ligase of Leuconostoc mesenteroides subsp. mesenteroides (strain ATCC 8293 / DSM 20343 / BCRC 11652 / CCM 1803 / JCM 6124 / NCDO 523 / NBRC 100496 / NCIMB 8023 / NCTC 12954 / NRRL B-1118 / 37Y).